A 391-amino-acid chain; its full sequence is Immediate-early protein 2 (391 aa).

This sequence belongs to the herpesviridae US22 family.

It localises to the host cytoplasm. It is found in the host nucleus. In terms of biological role, involved in the reactivation of latent MCMV in spleen cells. The chain is Immediate-early protein 2 (IE2) from Murid herpesvirus 1 (strain Smith) (MuHV-1).